Reading from the N-terminus, the 403-residue chain is Probable tubulin--tyrosine ligase C12B10.04 (403 aa).

In terms of domain architecture, TTL spans 9-386 (KVYVNYRDEY…PFFESSTKRN (378 aa)).

It belongs to the tubulin--tyrosine ligase family. The cofactor is Mg(2+). K(+) is required as a cofactor.

The protein localises to the cytoplasm. Its subcellular location is the nucleus. It carries out the reaction C-terminal L-alpha-aminoacyl-L-glutamyl-L-glutamyl-[tubulin] + L-tyrosine + ATP = C-terminal L-alpha-aminoacyl-L-glutamyl-L-glutamyl-L-tyrosyl-[tubulin] + ADP + phosphate + H(+). In terms of biological role, probable tubulin--tyrosine ligase. The protein is Probable tubulin--tyrosine ligase C12B10.04 of Schizosaccharomyces pombe (strain 972 / ATCC 24843) (Fission yeast).